The sequence spans 1020 residues: Glycine dehydrogenase (decarboxylating), mitochondrial (1020 aa).

The N-terminal 35 residues, 1 to 35 (MQSCARAWGLRLGRGVGGGRRLAGGSGPCWAPRSR), are a transit peptide targeting the mitochondrion. The segment at 21-46 (RLAGGSGPCWAPRSRDSSSGGGDSAA) is disordered. Lys447, Lys514, Lys648, and Lys664 each carry N6-acetyllysine. Lys754 carries the post-translational modification N6-(pyridoxal phosphate)lysine.

This sequence belongs to the GcvP family. Homodimer. Interacts with GCSH. The glycine cleavage system is composed of four proteins: P (GLDC), T (GCST), L (DLD) and H (GCSH). Pyridoxal 5'-phosphate serves as cofactor.

It is found in the mitochondrion. The enzyme catalyses N(6)-[(R)-lipoyl]-L-lysyl-[glycine-cleavage complex H protein] + glycine + H(+) = N(6)-[(R)-S(8)-aminomethyldihydrolipoyl]-L-lysyl-[glycine-cleavage complex H protein] + CO2. With respect to regulation, stimulated by lipoic acid. Inhibited in presence of methylamine. Its function is as follows. The glycine cleavage system catalyzes the degradation of glycine. The P protein (GLDC) binds the alpha-amino group of glycine through its pyridoxal phosphate cofactor; CO(2) is released and the remaining methylamine moiety is then transferred to the lipoamide cofactor of the H protein (GCSH). This chain is Glycine dehydrogenase (decarboxylating), mitochondrial, found in Homo sapiens (Human).